Consider the following 149-residue polypeptide: Alpha-crystallin A chain (149 aa).

Positions 28-138 (LLRGFMDSGI…SHSERPIPVS (111 aa)) constitute a sHSP domain. The Zn(2+) site is built by histidine 55, histidine 76, glutamate 78, histidine 83, histidine 91, and histidine 130. Positions 125–149 (NLVSSHSERPIPVSREEKPTSAPSS) are disordered. Residues 130–143 (HSERPIPVSREEKP) are compositionally biased toward basic and acidic residues. A glycan (O-linked (GlcNAc) serine) is linked at serine 138.

This sequence belongs to the small heat shock protein (HSP20) family. In terms of assembly, heteropolymer composed of three CRYAA and one CRYAB subunits. Inter-subunit bridging via zinc ions enhances stability, which is crucial as there is no protein turn over in the lens. Can also form homodimers and homotetramers (dimers of dimers) which serve as the building blocks of homooligomers. Within homooligomers, the zinc-binding motif is created from residues of 3 different molecules. His-76 and Glu-78 from one molecule are ligands of the zinc ion, and His-83 and His-130 residues from additional molecules complete the site with tetrahedral coordination geometry.

It is found in the cytoplasm. The protein resides in the nucleus. Its function is as follows. Contributes to the transparency and refractive index of the lens. May act as a chaperone, preventing aggregation of various proteins under a wide range of stress conditions. This is Alpha-crystallin A chain (CRYAA) from Rana temporaria (European common frog).